The chain runs to 134 residues: Ribosome-binding factor A (134 aa).

Belongs to the RbfA family. As to quaternary structure, monomer. Binds 30S ribosomal subunits, but not 50S ribosomal subunits or 70S ribosomes.

The protein resides in the cytoplasm. Functionally, one of several proteins that assist in the late maturation steps of the functional core of the 30S ribosomal subunit. Associates with free 30S ribosomal subunits (but not with 30S subunits that are part of 70S ribosomes or polysomes). Required for efficient processing of 16S rRNA. May interact with the 5'-terminal helix region of 16S rRNA. The sequence is that of Ribosome-binding factor A from Sinorhizobium medicae (strain WSM419) (Ensifer medicae).